The sequence spans 226 residues: Fibrillarin-like rRNA/tRNA 2'-O-methyltransferase (226 aa).

Residues 85-86 (TT), 104-105 (EF), 129-130 (DA), and 149-152 (DVAQ) each bind S-adenosyl-L-methionine.

It belongs to the methyltransferase superfamily. Fibrillarin family. Interacts with nop5. Component of box C/D small ribonucleoprotein (sRNP) particles that contain rpl7ae, FlpA and nop5, plus a guide RNA.

Involved in pre-rRNA and tRNA processing. Utilizes the methyl donor S-adenosyl-L-methionine to catalyze the site-specific 2'-hydroxyl methylation of ribose moieties in rRNA and tRNA. Site specificity is provided by a guide RNA that base pairs with the substrate. Methylation occurs at a characteristic distance from the sequence involved in base pairing with the guide RNA. The chain is Fibrillarin-like rRNA/tRNA 2'-O-methyltransferase from Thermococcus gammatolerans (strain DSM 15229 / JCM 11827 / EJ3).